We begin with the raw amino-acid sequence, 818 residues long: H(+)/Cl(-) exchange transporter 3 (818 aa).

Residues 1–125 (MESEQLFHRG…WEMTKSLYDA (125 aa)) lie on the Cytoplasmic side of the membrane. 3 short sequence motifs (di-leucine internalization motif; mediates targeting to late endosome and lysosome membranes) span residues 28–29 (LL), 46–47 (LL), and 71–75 (LLDLL). Residues 126–163 (WSGWLVVTLTGLASGALAGLIDIAADWMTDLKEGICLS) form a helical membrane-spanning segment. An N-linked (GlcNAc...) asparagine glycan is attached at asparagine 177. Residues 209-232 (MNYIMYIFWALSFAFLAVSLVKVF) traverse the membrane as a helical segment. Positions 238–242 (GSGIP) match the Selectivity filter part_1 motif. A chloride-binding site is contributed by serine 239. Residues 241–248 (IPEIKTIL) constitute an intramembrane region (helical). A run of 2 helical transmembrane segments spans residues 258–276 (GKWT…VASG) and 282–301 (EGPL…YLFP). Residues 280 to 284 (GKEGP) carry the Selectivity filter part_2 motif. Intramembrane regions (helical) lie at residues 313-325 (VLSA…VSVA) and 329-337 (PIGGVLFSL). The next 3 helical transmembrane spans lie at 349–367 (LWRS…RSIN), 391–416 (FPFI…AWCR), and 423–443 (FGKY…VIAF). Asparagine 451 and asparagine 479 each carry an N-linked (GlcNAc...) asparagine glycan. A run of 2 helical transmembrane segments spans residues 500-520 (IWQL…TFGI) and 525-544 (GLFI…VGIA). The short motif at 525 to 529 (GLFIP) is the Selectivity filter part_3 element. A chloride-binding site is contributed by phenylalanine 527. 2 intramembrane regions (helical) span residues 572–586 (GLYA…LGGV) and 590–601 (TVSLVVIVFELT). An intramembrane region (note=Loop between two helices) is located at residues 602–605 (GGLE). A helical membrane pass occupies residues 606–624 (YIVPLMAAVMTSKWVGDAF). Topologically, residues 625-818 (GREGIYEAHI…NQDPASIMFN (194 aa)) are cytoplasmic. Tyrosine 630 is a chloride binding site. CBS domains lie at 658–722 (MRPR…ARKK) and 755–812 (LDMS…NQDP). Residues 689–691 (YNG) and 796–799 (TKKD) each bind ATP.

This sequence belongs to the chloride channel (TC 2.A.49) family. ClC-3/CLCN3 subfamily. Monomer and homodimer. Forms heterodimers with CLCN4. In terms of assembly, interacts with GOPC, PDZK1 and NHERF1/EBP50. N-glycosylated. Expressed primarily in tissues derived from neuroectoderm. Within the brain, its expression is particularly evident in the hippocampus, olfactory cortex, and olfactory bulb. Highly expressed in aortic and coronary vascular smooth muscle cells, and aortic endothelial cells. Also expressed in tracheal and alveolar epithelial cells, and intima and media of the pulmonary vessels. Expressed in bronchus and colon (at protein level).

It is found in the early endosome membrane. Its subcellular location is the late endosome membrane. The protein resides in the lysosome membrane. It localises to the cell membrane. The protein localises to the golgi apparatus membrane. It is found in the cell projection. Its subcellular location is the ruffle membrane. In terms of biological role, strongly outwardly rectifying, electrogenic H(+)/Cl(-)exchanger which mediates the exchange of chloride ions against protons. The CLC channel family contains both chloride channels and proton-coupled anion transporters that exchange chloride or another anion for protons. The presence of conserved gating glutamate residues is typical for family members that function as antiporters. Its function is as follows. Strongly outwardly rectifying, electrogenic H(+)/Cl(-)exchanger which mediates the exchange of chloride ions against protons. The chain is H(+)/Cl(-) exchange transporter 3 (CLCN3) from Homo sapiens (Human).